The following is a 227-amino-acid chain: Nodulation protein W (227 aa).

The Response regulatory domain occupies 21–135 (IVFVVEDDIS…ELLDAVVAAT (115 aa)). Residue D70 is modified to 4-aspartylphosphate. The 66-residue stretch at 151–216 (LKSLFETLSP…DLIRMSETLG (66 aa)) folds into the HTH luxR-type domain. Positions 175–194 (NKQVAAELGLAEITVKIYRG) form a DNA-binding region, H-T-H motif.

Phosphorylated by NodV.

The protein localises to the cytoplasm. Member of the two-component regulatory system NodV/NodW probably involved in the regulation of the transcription of genes involved in the nodulation process. This Bradyrhizobium diazoefficiens (strain JCM 10833 / BCRC 13528 / IAM 13628 / NBRC 14792 / USDA 110) protein is Nodulation protein W (nodW).